The chain runs to 334 residues: Beta-ketoacyl-[acyl-carrier-protein] synthase III (334 aa).

Active-site residues include cysteine 114 and histidine 260. Residues 261–265 form an ACP-binding region; that stretch reads QANLR. Asparagine 290 is an active-site residue.

Belongs to the thiolase-like superfamily. FabH family. Homodimer.

The protein resides in the cytoplasm. It catalyses the reaction malonyl-[ACP] + acetyl-CoA + H(+) = 3-oxobutanoyl-[ACP] + CO2 + CoA. The protein operates within lipid metabolism; fatty acid biosynthesis. Functionally, catalyzes the condensation reaction of fatty acid synthesis by the addition to an acyl acceptor of two carbons from malonyl-ACP. Catalyzes the first condensation reaction which initiates fatty acid synthesis and may therefore play a role in governing the total rate of fatty acid production. Possesses both acetoacetyl-ACP synthase and acetyl transacylase activities. Its substrate specificity determines the biosynthesis of branched-chain and/or straight-chain of fatty acids. The chain is Beta-ketoacyl-[acyl-carrier-protein] synthase III from Clostridium tetani (strain Massachusetts / E88).